Consider the following 282-residue polypeptide: Bis(5'-nucleosyl)-tetraphosphatase, symmetrical (282 aa).

The protein belongs to the Ap4A hydrolase family.

The catalysed reaction is P(1),P(4)-bis(5'-adenosyl) tetraphosphate + H2O = 2 ADP + 2 H(+). Hydrolyzes diadenosine 5',5'''-P1,P4-tetraphosphate to yield ADP. This Citrobacter koseri (strain ATCC BAA-895 / CDC 4225-83 / SGSC4696) protein is Bis(5'-nucleosyl)-tetraphosphatase, symmetrical.